The sequence spans 189 residues: Ribosomal RNA large subunit methyltransferase E (189 aa).

Positions 45, 47, 64, 82, and 104 each coordinate S-adenosyl-L-methionine. Residue Lys-144 is the Proton acceptor of the active site.

The protein belongs to the class I-like SAM-binding methyltransferase superfamily. RNA methyltransferase RlmE family.

It is found in the cytoplasm. The catalysed reaction is uridine(2552) in 23S rRNA + S-adenosyl-L-methionine = 2'-O-methyluridine(2552) in 23S rRNA + S-adenosyl-L-homocysteine + H(+). Specifically methylates the uridine in position 2552 of 23S rRNA at the 2'-O position of the ribose in the fully assembled 50S ribosomal subunit. The sequence is that of Ribosomal RNA large subunit methyltransferase E from Borreliella afzelii (strain PKo) (Borrelia afzelii).